The sequence spans 984 residues: Detocs histidine-protein kinase DtcA (984 aa).

H645 carries the post-translational modification Phosphohistidine; by autocatalysis.

Post-translationally, autophosphorylated.

It catalyses the reaction ATP + protein L-histidine = ADP + protein N-phospho-L-histidine.. Functionally, sensor-kinase member of the two-component regulatory system Detocs that confers resistance to bacteriophage. When the system (DtcA-DtcB-DtcC) is expressed in a susceptible E.coli (strain MG1655) it confers resistance to bacteriophages T2, T4, T5, T6 and SECphi27. Detocs inhibits T5 infection leading to growth arrest but not complete cell lysis, during SECphi27 infection leads to cell lysis. DtcA (this subunit) probably autophosphorylates upon sensing viral infection, and subsequently transfers the phosphate signal to DtcC which activates it, leading to an antiviral defense; DtcB may scavenge phosphorylation signals from accidental activation of DtcA. In Vibrio alginolyticus, this protein is Detocs histidine-protein kinase DtcA.